The following is a 269-amino-acid chain: Flagellar brake protein YcgR (269 aa).

The PilZ domain maps to 134 to 254 (QRRNFYRVTT…SRLLIQRYIT (121 aa)).

The protein belongs to the YcgR family. As to quaternary structure, monomer. Interacts with the flagellar basal bodies.

It is found in the bacterial flagellum basal body. Its function is as follows. Acts as a flagellar brake, regulating swimming and swarming in a bis-(3'-5') cyclic diguanylic acid (c-di-GMP)-dependent manner. Binds 1 c-di-GMP dimer per subunit. Increasing levels of c-di-GMP lead to decreased motility. This chain is Flagellar brake protein YcgR, found in Nitrosomonas eutropha (strain DSM 101675 / C91 / Nm57).